Consider the following 905-residue polypeptide: DNA-directed RNA polymerase subunit Rpo1N (905 aa).

Positions 60, 63, 70, 73, 100, 103, 147, and 150 each coordinate Zn(2+). Positions 461, 463, and 465 each coordinate Mg(2+).

This sequence belongs to the RNA polymerase beta' chain family. Part of the RNA polymerase complex. It depends on Mg(2+) as a cofactor. Zn(2+) is required as a cofactor.

The protein resides in the cytoplasm. It carries out the reaction RNA(n) + a ribonucleoside 5'-triphosphate = RNA(n+1) + diphosphate. Its function is as follows. DNA-dependent RNA polymerase (RNAP) catalyzes the transcription of DNA into RNA using the four ribonucleoside triphosphates as substrates. Forms the clamp head domain. This Thermococcus celer protein is DNA-directed RNA polymerase subunit Rpo1N.